We begin with the raw amino-acid sequence, 186 residues long: Ribosome-recycling factor (186 aa).

Belongs to the RRF family.

The protein resides in the cytoplasm. Its function is as follows. Responsible for the release of ribosomes from messenger RNA at the termination of protein biosynthesis. May increase the efficiency of translation by recycling ribosomes from one round of translation to another. The sequence is that of Ribosome-recycling factor from Paracidovorax citrulli (strain AAC00-1) (Acidovorax citrulli).